A 270-amino-acid polypeptide reads, in one-letter code: Cytochrome c oxidase subunit 3 (270 aa).

The next 7 helical transmembrane spans lie at 21-41, 46-66, 90-110, 131-151, 167-187, 205-225, and 248-268; these read PWPF…VLYF, GSLV…FVWW, GIML…WAFF, FFSP…SGCA, AIFS…FQIY, FFMI…FLFV, and WYWH…YWWG.

It belongs to the cytochrome c oxidase subunit 3 family. Component of the cytochrome c oxidase (complex IV, CIV), a multisubunit enzyme composed of a catalytic core of 3 subunits and several supernumerary subunits. The complex exists as a monomer or a dimer and forms supercomplexes (SCs) in the inner mitochondrial membrane with ubiquinol-cytochrome c oxidoreductase (cytochrome b-c1 complex, complex III, CIII).

It localises to the mitochondrion inner membrane. The enzyme catalyses 4 Fe(II)-[cytochrome c] + O2 + 8 H(+)(in) = 4 Fe(III)-[cytochrome c] + 2 H2O + 4 H(+)(out). Component of the cytochrome c oxidase, the last enzyme in the mitochondrial electron transport chain which drives oxidative phosphorylation. The respiratory chain contains 3 multisubunit complexes succinate dehydrogenase (complex II, CII), ubiquinol-cytochrome c oxidoreductase (cytochrome b-c1 complex, complex III, CIII) and cytochrome c oxidase (complex IV, CIV), that cooperate to transfer electrons derived from NADH and succinate to molecular oxygen, creating an electrochemical gradient over the inner membrane that drives transmembrane transport and the ATP synthase. Cytochrome c oxidase is the component of the respiratory chain that catalyzes the reduction of oxygen to water. Electrons originating from reduced cytochrome c in the intermembrane space (IMS) are transferred via the dinuclear copper A center (CU(A)) of subunit 2 and heme A of subunit 1 to the active site in subunit 1, a binuclear center (BNC) formed by heme A3 and copper B (CU(B)). The BNC reduces molecular oxygen to 2 water molecules using 4 electrons from cytochrome c in the IMS and 4 protons from the mitochondrial matrix. The sequence is that of Cytochrome c oxidase subunit 3 (COX3) from Cyanidium caldarium (Red alga).